Here is a 452-residue protein sequence, read N- to C-terminus: Phosphoglucosamine mutase (452 aa).

S104 serves as the catalytic Phosphoserine intermediate. Residues S104, D241, D243, and D245 each coordinate Mg(2+). S104 carries the phosphoserine modification.

Belongs to the phosphohexose mutase family. Requires Mg(2+) as cofactor. Post-translationally, activated by phosphorylation.

It carries out the reaction alpha-D-glucosamine 1-phosphate = D-glucosamine 6-phosphate. In terms of biological role, catalyzes the conversion of glucosamine-6-phosphate to glucosamine-1-phosphate. The protein is Phosphoglucosamine mutase of Arthrobacter sp. (strain FB24).